Consider the following 97-residue polypeptide: Ig heavy chain V region 914 (97 aa).

In terms of domain architecture, Ig-like spans Glu1–Arg97.

The protein is Ig heavy chain V region 914 of Mus musculus (Mouse).